Reading from the N-terminus, the 87-residue chain is Large ribosomal subunit protein eL31 (87 aa).

The protein belongs to the eukaryotic ribosomal protein eL31 family.

The chain is Large ribosomal subunit protein eL31 from Methanosphaerula palustris (strain ATCC BAA-1556 / DSM 19958 / E1-9c).